A 96-amino-acid polypeptide reads, in one-letter code: Protein RnfH (96 aa).

It belongs to the UPF0125 (RnfH) family.

The chain is Protein RnfH from Salmonella agona (strain SL483).